We begin with the raw amino-acid sequence, 597 residues long: Elongation factor 4 (597 aa).

A tr-type G domain is found at 2 to 184 (KNIRNFSIIA…TVVQKIPAPK (183 aa)). GTP-binding positions include 14-19 (DHGKST) and 131-134 (NKID).

Belongs to the TRAFAC class translation factor GTPase superfamily. Classic translation factor GTPase family. LepA subfamily.

The protein resides in the cell inner membrane. The catalysed reaction is GTP + H2O = GDP + phosphate + H(+). Its function is as follows. Required for accurate and efficient protein synthesis under certain stress conditions. May act as a fidelity factor of the translation reaction, by catalyzing a one-codon backward translocation of tRNAs on improperly translocated ribosomes. Back-translocation proceeds from a post-translocation (POST) complex to a pre-translocation (PRE) complex, thus giving elongation factor G a second chance to translocate the tRNAs correctly. Binds to ribosomes in a GTP-dependent manner. This Laribacter hongkongensis (strain HLHK9) protein is Elongation factor 4.